A 176-amino-acid polypeptide reads, in one-letter code: Cytochrome b (176 aa).

3 helical membrane passes run 33–53 (FGSL…FLAM), 77–98 (WLLR…YLHV), and 113–133 (WNVG…GYVL). Positions 83 and 97 each coordinate heme b.

Belongs to the cytochrome b family. As to quaternary structure, the cytochrome bc1 complex contains 11 subunits: 3 respiratory subunits (MT-CYB, CYC1 and UQCRFS1), 2 core proteins (UQCRC1 and UQCRC2) and 6 low-molecular weight proteins (UQCRH/QCR6, UQCRB/QCR7, UQCRQ/QCR8, UQCR10/QCR9, UQCR11/QCR10 and a cleavage product of UQCRFS1). This cytochrome bc1 complex then forms a dimer. Heme b serves as cofactor.

It is found in the mitochondrion inner membrane. Its function is as follows. Component of the ubiquinol-cytochrome c reductase complex (complex III or cytochrome b-c1 complex) that is part of the mitochondrial respiratory chain. The b-c1 complex mediates electron transfer from ubiquinol to cytochrome c. Contributes to the generation of a proton gradient across the mitochondrial membrane that is then used for ATP synthesis. The polypeptide is Cytochrome b (MT-CYB) (Tadarida brasiliensis (Brazilian free-tailed bat)).